The primary structure comprises 215 residues: Transmembrane protein 267 (215 aa).

3 consecutive transmembrane segments (helical) span residues 77–97 (FGEI…HFLL), 114–134 (FLHC…TMHF), and 178–198 (FWLY…VMYF).

The protein localises to the membrane. In Bos taurus (Bovine), this protein is Transmembrane protein 267 (TMEM267).